The chain runs to 288 residues: ATP synthase gamma chain (288 aa).

The protein belongs to the ATPase gamma chain family. In terms of assembly, F-type ATPases have 2 components, CF(1) - the catalytic core - and CF(0) - the membrane proton channel. CF(1) has five subunits: alpha(3), beta(3), gamma(1), delta(1), epsilon(1). CF(0) has three main subunits: a, b and c.

Its subcellular location is the cell inner membrane. Its function is as follows. Produces ATP from ADP in the presence of a proton gradient across the membrane. The gamma chain is believed to be important in regulating ATPase activity and the flow of protons through the CF(0) complex. This Vibrio parahaemolyticus serotype O3:K6 (strain RIMD 2210633) protein is ATP synthase gamma chain.